Consider the following 632-residue polypeptide: Phosphatidylinositol 3,4,5-trisphosphate 3-phosphatase and protein-tyrosine-phosphatase PTEN2B (632 aa).

Positions 1–12 (METDPANSSSKS) are enriched in polar residues. The tract at residues 1–98 (METDPANSSS…RESPPSIFSS (98 aa)) is disordered. Positions 39-48 (SAEREAHEDS) are enriched in basic and acidic residues. Residues 63–73 (MPASSTGSEPL) show a composition bias toward polar residues. Residues 87 to 98 (SPRESPPSIFSS) are compositionally biased toward low complexity. The Phosphatase tensin-type domain maps to 189–368 (RRYQEGEFDL…KYYERVQNQF (180 aa)). Catalysis depends on Cys307, which acts as the Phosphocysteine intermediate. A C2 tensin-type domain is found at 375-502 (ERRCMLRGFR…FHVEIVMIEP (128 aa)). The segment at 504 to 603 (NSQPTKSKSD…SGHYNPIPNN (100 aa)) is disordered. A compositionally biased stretch (low complexity) spans 505–527 (SQPTKSKSDSTQQQSQSSSSADS). Acidic residues predominate over residues 535–549 (KDDDVFSDSDGEEEG). Ser541 bears the Phosphoserine mark. The span at 550–571 (NSQSYSTNEKTASSMHTTSKPH) shows a compositional bias: polar residues. Over residues 584 to 594 (ANRSVTSSSSS) the composition is skewed to low complexity.

The protein belongs to the PTEN phosphatase protein family. In terms of tissue distribution, expressed, at low levels, in seedlings, roots, stems, leaves, flowers and siliques. However, at protein level, not observed in older leaves, flowers and siliques.

The catalysed reaction is O-phospho-L-tyrosyl-[protein] + H2O = L-tyrosyl-[protein] + phosphate. It carries out the reaction a 1,2-diacyl-sn-glycero-3-phospho-(1D-myo-inositol-3,4,5-trisphosphate) + H2O = a 1,2-diacyl-sn-glycero-3-phospho-(1D-myo-inositol-4,5-bisphosphate) + phosphate. In terms of biological role, protein tyrosine phosphatase that also exhibits a weak lipid phosphatase activity towards PtdIns(3)P. This Arabidopsis thaliana (Mouse-ear cress) protein is Phosphatidylinositol 3,4,5-trisphosphate 3-phosphatase and protein-tyrosine-phosphatase PTEN2B.